We begin with the raw amino-acid sequence, 170 residues long: Inosine/xanthosine triphosphatase (170 aa).

This sequence belongs to the YjjX NTPase family. Homodimer. Mg(2+) is required as a cofactor. It depends on Mn(2+) as a cofactor.

The enzyme catalyses XTP + H2O = XDP + phosphate + H(+). It catalyses the reaction ITP + H2O = IDP + phosphate + H(+). Phosphatase that hydrolyzes non-canonical purine nucleotides such as XTP and ITP to their respective diphosphate derivatives. Probably excludes non-canonical purines from DNA/RNA precursor pool, thus preventing their incorporation into DNA/RNA and avoiding chromosomal lesions. This Aliivibrio fischeri (strain ATCC 700601 / ES114) (Vibrio fischeri) protein is Inosine/xanthosine triphosphatase.